The chain runs to 354 residues: Rhodopsin (354 aa).

Residues 1–36 (MNGTEGPNFYVPMSNKTGVVRSPFDYPQYYLAEPWQ) lie on the Extracellular side of the membrane. Asn-2 and Asn-15 each carry an N-linked (GlcNAc...) asparagine glycan. A helical membrane pass occupies residues 37–61 (YSALAAYMFLLILLGLPINFMTLFV). Topologically, residues 62–73 (TIQHKKLRTPLN) are cytoplasmic. The chain crosses the membrane as a helical span at residues 74–96 (YILLNLVFANHFMVLCGFTVTMY). Over 97-110 (TSMHGYFIFGPTGC) the chain is Extracellular. Cysteines 110 and 187 form a disulfide. The chain crosses the membrane as a helical span at residues 111 to 133 (YIEGFFATLGGEVALWSLVVLAV). The 'Ionic lock' involved in activated form stabilization signature appears at 134–136 (ERY). Residues 134–152 (ERYIVVCKPMANFRFGENH) lie on the Cytoplasmic side of the membrane. A helical membrane pass occupies residues 153-173 (AIMGVAFTWIMALSCAAPPLF). At 174–202 (GWSRYIPEGMQCSCGVDYYTLKPEVNNES) the chain is on the extracellular side. The helical transmembrane segment at 203–224 (FVIYMFIVHFTIPLIVIFFCYG) threads the bilayer. Topologically, residues 225 to 252 (RLLCTVKEAAAQQQESLTTQKAEKEVTR) are cytoplasmic. Residues 253 to 274 (MVVIMVVFFLICWVPYAYVAFY) traverse the membrane as a helical segment. At 275–286 (IFTHQGSNFGPV) the chain is on the extracellular side. The chain crosses the membrane as a helical span at residues 287–308 (FMTVPAFFAKSSAIYNPVIYIV). The residue at position 296 (Lys-296) is an N6-(retinylidene)lysine. Residues 309–354 (LNKQFRNCLITTLCCGKNPFGDEDGSSAATSKTEASSVSSSQVSPA) are Cytoplasmic-facing. 2 S-palmitoyl cysteine lipidation sites follow: Cys-322 and Cys-323. Positions 331-354 (EDGSSAATSKTEASSVSSSQVSPA) are disordered. Residues 334-354 (SSAATSKTEASSVSSSQVSPA) are compositionally biased toward low complexity.

This sequence belongs to the G-protein coupled receptor 1 family. Opsin subfamily. Post-translationally, contains one covalently linked retinal chromophore. Upon light absorption, the covalently bound 11-cis-retinal is converted to all-trans-retinal. After hydrolysis of the Schiff base and release of the covalently bound all-trans-retinal, active rhodopsin is regenerated by binding of a fresh molecule of 11-cis-retinal.

It localises to the membrane. The protein localises to the cell projection. The protein resides in the cilium. It is found in the photoreceptor outer segment. Photoreceptor required for image-forming vision at low light intensity. Required for photoreceptor cell viability after birth. Light-induced isomerization of 11-cis to all-trans retinal triggers a conformational change that activates signaling via G-proteins. Subsequent receptor phosphorylation mediates displacement of the bound G-protein alpha subunit by arrestin and terminates signaling. This is Rhodopsin (rho) from Xenopus laevis (African clawed frog).